Reading from the N-terminus, the 954-residue chain is Serine/threonine-protein kinase ste20 (954 aa).

A compositionally biased stretch (low complexity) spans 1 to 17 (MDGQLSLLSPTSSSSTS). Disordered stretches follow at residues 1-165 (MDGQ…YDPL) and 203-316 (AAPA…RKKS). Over residues 18–28 (HSRKRLTKKQR) the composition is skewed to basic residues. Polar residues-rich tracts occupy residues 33-42 (NHRTSSSFNV), 57-75 (SASS…SLAR), and 100-121 (RSHT…TIPT). Low complexity-rich tracts occupy residues 127–136 (SPASSSQPQT), 143–153 (SAVASTTVTSS), and 203–214 (AAPAPTSTTTIA). A compositionally biased stretch (pro residues) spans 224–234 (VAPPPPPPPPA). Low complexity-rich tracts occupy residues 245 to 256 (ARSSKPSKSPKS) and 265 to 277 (ASSF…FSSA). The CRIB domain occupies 334–347 (ISAPENPVHVTHVG). Disordered stretches follow at residues 440–562 (PMIS…VQAS) and 587–655 (QAMA…SNAI). Pro residues-rich tracts occupy residues 463-475 (RAPP…PGPL) and 514-527 (MPPP…PYLP). Positions 674–925 (YRGFTKIGQG…AHDLLRHDFM (252 aa)) constitute a Protein kinase domain. ATP-binding positions include 680 to 688 (IGQGASGGV) and lysine 703. Residue aspartate 793 is the Proton acceptor of the active site.

It belongs to the protein kinase superfamily. STE Ser/Thr protein kinase family. STE20 subfamily.

It is found in the cytoplasm. It localises to the nucleus. The catalysed reaction is L-seryl-[protein] + ATP = O-phospho-L-seryl-[protein] + ADP + H(+). It catalyses the reaction L-threonyl-[protein] + ATP = O-phospho-L-threonyl-[protein] + ADP + H(+). In terms of biological role, MAP4K component of the MAPK pathway required for the mating pheromone response and the regulation of cell polarity and cell cycle. Phosphorylates histone H2B to form H2BS10ph. The polypeptide is Serine/threonine-protein kinase ste20 (stk-4) (Neurospora crassa (strain ATCC 24698 / 74-OR23-1A / CBS 708.71 / DSM 1257 / FGSC 987)).